Here is a 404-residue protein sequence, read N- to C-terminus: DNA replication and repair protein RecF (404 aa).

30–37 is an ATP binding site; sequence GSNGQGKT.

This sequence belongs to the RecF family.

It is found in the cytoplasm. The RecF protein is involved in DNA metabolism; it is required for DNA replication and normal SOS inducibility. RecF binds preferentially to single-stranded, linear DNA. It also seems to bind ATP. The sequence is that of DNA replication and repair protein RecF from Clavibacter michiganensis subsp. michiganensis (strain NCPPB 382).